Reading from the N-terminus, the 768-residue chain is UPF0313 protein VV1_2212 (768 aa).

The Radical SAM core domain maps to 363 to 640; that stretch reads AYDMIKTSVN…LHKALLRYHD (278 aa). [4Fe-4S] cluster contacts are provided by Cys-377, Cys-381, and Cys-384. The segment at 674 to 768 is disordered; it reads DARTPAQRRK…GGRNQPSRAR (95 aa). Positions 679-689 are enriched in basic residues; it reads AQRRKSGRHGA. Over residues 719 to 731 the composition is skewed to polar residues; the sequence is GGQSNSAPSRSGS.

This sequence belongs to the UPF0313 family. Requires [4Fe-4S] cluster as cofactor.

In Vibrio vulnificus (strain CMCP6), this protein is UPF0313 protein VV1_2212.